Consider the following 682-residue polypeptide: DNA ligase (682 aa).

NAD(+) contacts are provided by residues 38–42 (DAEYD), 87–88 (SI), and E119. K121 (N6-AMP-lysine intermediate) is an active-site residue. Residues R142, E181, K298, and K322 each contribute to the NAD(+) site. Positions 416, 419, 434, and 439 each coordinate Zn(2+). The BRCT domain occupies 601–682 (GHEMPLAGKT…LLSLLEPGER (82 aa)).

Belongs to the NAD-dependent DNA ligase family. LigA subfamily. Mg(2+) is required as a cofactor. The cofactor is Mn(2+).

The enzyme catalyses NAD(+) + (deoxyribonucleotide)n-3'-hydroxyl + 5'-phospho-(deoxyribonucleotide)m = (deoxyribonucleotide)n+m + AMP + beta-nicotinamide D-nucleotide.. In terms of biological role, DNA ligase that catalyzes the formation of phosphodiester linkages between 5'-phosphoryl and 3'-hydroxyl groups in double-stranded DNA using NAD as a coenzyme and as the energy source for the reaction. It is essential for DNA replication and repair of damaged DNA. The sequence is that of DNA ligase from Desulfosudis oleivorans (strain DSM 6200 / JCM 39069 / Hxd3) (Desulfococcus oleovorans).